Here is a 181-residue protein sequence, read N- to C-terminus: Adenylate kinase (181 aa).

Residue 10–15 (GAGKGT) participates in ATP binding. The tract at residues 30-59 (STGDLFRANIGEGTPLGIEAKQYIDAGKLV) is NMP. AMP is bound by residues Thr-31, Arg-36, 57 to 59 (KLV), 85 to 88 (GFPR), and Gln-92. An LID region spans residues 126–132 (SRGRADD). Arg-127 provides a ligand contact to ATP. Positions 129 and 140 each coordinate AMP. Gly-166 serves as a coordination point for ATP.

Belongs to the adenylate kinase family. As to quaternary structure, monomer.

The protein resides in the cytoplasm. It catalyses the reaction AMP + ATP = 2 ADP. Its pathway is purine metabolism; AMP biosynthesis via salvage pathway; AMP from ADP: step 1/1. In terms of biological role, catalyzes the reversible transfer of the terminal phosphate group between ATP and AMP. Plays an important role in cellular energy homeostasis and in adenine nucleotide metabolism. The chain is Adenylate kinase from Corynebacterium glutamicum (strain R).